The chain runs to 355 residues: Histidinol-phosphate aminotransferase 2 (355 aa).

Lysine 213 is modified (N6-(pyridoxal phosphate)lysine).

The protein belongs to the class-II pyridoxal-phosphate-dependent aminotransferase family. Histidinol-phosphate aminotransferase subfamily. In terms of assembly, homodimer. It depends on pyridoxal 5'-phosphate as a cofactor.

The catalysed reaction is L-histidinol phosphate + 2-oxoglutarate = 3-(imidazol-4-yl)-2-oxopropyl phosphate + L-glutamate. Its pathway is amino-acid biosynthesis; L-histidine biosynthesis; L-histidine from 5-phospho-alpha-D-ribose 1-diphosphate: step 7/9. This is Histidinol-phosphate aminotransferase 2 from Burkholderia lata (strain ATCC 17760 / DSM 23089 / LMG 22485 / NCIMB 9086 / R18194 / 383).